The following is a 524-amino-acid chain: 12S seed storage protein CRC (524 aa).

An N-terminal signal peptide occupies residues 1–23; it reads MVKLSNLLVATFGVLLVLNGCLA. The cysteines at positions 37 and 70 are disulfide-linked. Cupin type-1 domains follow at residues 42 to 289 and 346 to 495; these read LDVL…QLAQ and ENID…EEAR. Residue S53 is modified to Phosphoserine. Phosphotyrosine is present on Y78. Position 97 is a phosphoserine (S97). Residues C113 and C340 are joined by a disulfide bond. T116 is modified (phosphothreonine). A disordered region spans residues 119–190; the sequence is DSQPMQGQQQ…QGQQGQQGFR (72 aa). Residues 124-188 show a composition bias toward low complexity; sequence QGQQQGQPWQ…EGQGQQGQQG (65 aa). Phosphoserine occurs at positions 259 and 366. T459 bears the Phosphothreonine mark. The residue at position 484 (S484) is a Phosphoserine. T501 is modified (phosphothreonine).

It belongs to the 11S seed storage protein (globulins) family. As to quaternary structure, hexamer; each subunit is composed of an acidic and a basic chain derived from a single precursor and linked by a disulfide bond. In terms of processing, proteolytically processed during seed maturation at a conserved Asn-Gly peptide bond by an asparaginyl endopeptidase to produce two mature polypeptides referred to as alpha and beta subunits that are joined together by a disulfide bond. Phosphorylated in seeds on some Tyr residues in response to abscisic acid (ABA). Accumulates in seeds 8 days after anthesis.

It localises to the protein storage vacuole. In terms of biological role, seed storage protein. This chain is 12S seed storage protein CRC (CRC), found in Arabidopsis thaliana (Mouse-ear cress).